A 316-amino-acid chain; its full sequence is Porphobilinogen deaminase (316 aa).

Position 245 is an S-(dipyrrolylmethanemethyl)cysteine (C245).

It belongs to the HMBS family. As to quaternary structure, monomer. Requires dipyrromethane as cofactor.

The enzyme catalyses 4 porphobilinogen + H2O = hydroxymethylbilane + 4 NH4(+). The protein operates within porphyrin-containing compound metabolism; protoporphyrin-IX biosynthesis; coproporphyrinogen-III from 5-aminolevulinate: step 2/4. It participates in porphyrin-containing compound metabolism; chlorophyll biosynthesis. Tetrapolymerization of the monopyrrole PBG into the hydroxymethylbilane pre-uroporphyrinogen in several discrete steps. The chain is Porphobilinogen deaminase from Prochlorococcus marinus subsp. pastoris (strain CCMP1986 / NIES-2087 / MED4).